A 36-amino-acid chain; its full sequence is uncharacterized protein (36 aa).

This is an uncharacterized protein from Haemophilus influenzae (strain ATCC 51907 / DSM 11121 / KW20 / Rd).